We begin with the raw amino-acid sequence, 307 residues long: Methionyl-tRNA formyltransferase (307 aa).

110–113 (SLLP) serves as a coordination point for (6S)-5,6,7,8-tetrahydrofolate.

The protein belongs to the Fmt family.

The enzyme catalyses L-methionyl-tRNA(fMet) + (6R)-10-formyltetrahydrofolate = N-formyl-L-methionyl-tRNA(fMet) + (6S)-5,6,7,8-tetrahydrofolate + H(+). Attaches a formyl group to the free amino group of methionyl-tRNA(fMet). The formyl group appears to play a dual role in the initiator identity of N-formylmethionyl-tRNA by promoting its recognition by IF2 and preventing the misappropriation of this tRNA by the elongation apparatus. In Chromobacterium violaceum (strain ATCC 12472 / DSM 30191 / JCM 1249 / CCUG 213 / NBRC 12614 / NCIMB 9131 / NCTC 9757 / MK), this protein is Methionyl-tRNA formyltransferase.